We begin with the raw amino-acid sequence, 159 residues long: Vesicle transport protein SFT2A (159 aa).

The Cytoplasmic portion of the chain corresponds to 1–36 (MEKLRRVLSGQDDEEQGLTAQVLDASSLSFNTRLKW). The residue at position 9 (S9) is a Phosphoserine. The chain crosses the membrane as a helical span at residues 37-57 (FAICFVCGVFFSILGTGLLWL). Residues 58-62 (PGGIK) lie on the Lumenal side of the membrane. A helical transmembrane segment spans residues 63 to 83 (LFAVFYTLGNLAALASTCFLM). The Cytoplasmic portion of the chain corresponds to 84 to 97 (GPVKQLKKMFEATR). A helical membrane pass occupies residues 98 to 118 (LLATIVMLLCFIFTLCAALWW). The Lumenal segment spans residues 119–122 (HKKG). A helical transmembrane segment spans residues 123–143 (LAVLFCILQFLSMTWYSLSYI). Residues 144–159 (PYARDAVIKCCSSLLS) are Cytoplasmic-facing.

Belongs to the SFT2 family.

It is found in the membrane. May be involved in fusion of retrograde transport vesicles derived from an endocytic compartment with the Golgi complex. The sequence is that of Vesicle transport protein SFT2A from Homo sapiens (Human).